The sequence spans 250 residues: Protein BTG4 (250 aa).

This sequence belongs to the BTG family. Interacts with CNOT7 and EIF4E. Interacts with CNOT8. In terms of tissue distribution, expressed in oocytes. Expressed in testis and in olfactory epithelium.

Its function is as follows. Adapter protein that bridges CNOT7, a catalytic subunit of the CCR4-NOT complex, to EIF4E, and facilitates maternal mRNAs decay during the maturation of oocytes and in the fertilized egg. It is therefore required for the maternal-zygotic transition (MZT), zygotic cleavage and initiation of embryonic development. This is Protein BTG4 (Btg4) from Mus musculus (Mouse).